The primary structure comprises 1032 residues: Histone lysine demethylase PHF8 (1032 aa).

The PHD-type zinc finger occupies 5-56 (PVYCLCRLPYDVTRFMIECDVCQDWFHGSCVGVEEDKAAEIDLYHCPNCQVT). The linker stretch occupies residues 65–83 (RRGAVKHADVGLGRDSGRP). A JmjC domain is found at 199 to 355 (FSDTRLSNLV…MQLRAYEIEK (157 aa)). Thr248 provides a ligand contact to substrate. Residues His251 and Asp253 each coordinate Fe cation. Substrate is bound at residue Lys268. Residue His323 coordinates Fe cation. Disordered regions lie at residues 455 to 515 (SGTP…KGKE), 577 to 660 (QGKK…VDFD), 697 to 857 (LDSA…REGA), 875 to 923 (QQEQ…EPPV), and 943 to 1015 (EYTA…ATAK). Residues 473–483 (QLNTPLTFSQH) show a composition bias toward polar residues. Over residues 583 to 592 (AGSANGAGSS) the composition is skewed to low complexity. The span at 620 to 632 (PRRRPSLPSKKKL) shows a compositional bias: basic residues. Residues 644-655 (PCSDPHRIREPG) show a composition bias toward basic and acidic residues. Low complexity-rich tracts occupy residues 699 to 710 (SALSEEAPASPS) and 724 to 739 (PPSSSSSSSSSSPLSI). The segment covering 774–784 (PGKRPIKRPAR) has biased composition (basic residues). Over residues 848-857 (KQERPVREGA) the composition is skewed to basic and acidic residues. The segment covering 882 to 891 (ITKRKYTKKK) has biased composition (basic residues). Low complexity predominate over residues 970-990 (SRRPSLSPQNSSSYSPSAPSP).

The protein belongs to the JHDM1 histone demethylase family. JHDM1D subfamily. The cofactor is Fe(2+).

The protein resides in the nucleus. Its subcellular location is the nucleolus. It catalyses the reaction N(6),N(6)-dimethyl-L-lysyl(36)-[histone H3] + 2 2-oxoglutarate + 2 O2 = L-lysyl(36)-[histone H3] + 2 formaldehyde + 2 succinate + 2 CO2. It carries out the reaction N(6),N(6)-dimethyl-L-lysyl(9)-[histone H3] + 2 2-oxoglutarate + 2 O2 = L-lysyl(9)-[histone H3] + 2 formaldehyde + 2 succinate + 2 CO2. Functionally, histone lysine demethylase with selectivity for the di- and monomethyl states that plays a key role cell cycle progression, rDNA transcription and brain development. Demethylates mono- and dimethylated histone H3 'Lys-9' residue (H3K9Me1 and H3K9Me2), dimethylated H3 'Lys-27' (H3K27Me2) and monomethylated histone H4 'Lys-20' residue (H4K20Me1). Acts as a transcription activator as H3K9Me1, H3K9Me2, H3K27Me2 and H4K20Me1 are epigenetic repressive marks. Involved in cell cycle progression by being required to control G1-S transition. Acts as a coactivator of rDNA transcription, by activating polymerase I (pol I) mediated transcription of rRNA genes. Has activity toward H4K20Me1 only when nucleosome is used as a substrate and when not histone octamer is used as substrate. Required for brain development, probably by regulating expression of neuron-specific genes. The chain is Histone lysine demethylase PHF8 (phf8) from Danio rerio (Zebrafish).